The chain runs to 386 residues: Beta-citrylglutamate synthase B (386 aa).

Residues 119–304 (FQELAGHGVP…VAGIIADYAA (186 aa)) enclose the ATP-grasp domain. ATP contacts are provided by residues Lys158, 193–203 (QKYVKESHGRD), and Arg219. The Mg(2+) site is built by Asp264, Glu277, and Asn279. Residues Asp264, Glu277, and Asn279 each contribute to the Mn(2+) site. Residues 325–359 (ASETSEPELGPPASTAVDNMSASSSSVDSDPESTE) form a disordered region. The span at 338–352 (STAVDNMSASSSSVD) shows a compositional bias: low complexity.

It belongs to the RimK family. The cofactor is Mg(2+). Requires Mn(2+) as cofactor.

The protein resides in the cytoplasm. It catalyses the reaction citrate + L-glutamate + ATP = beta-citrylglutamate + ADP + phosphate + H(+). It carries out the reaction N-acetyl-L-aspartate + L-glutamate + ATP = N-acetyl-L-aspartyl-L-glutamate + ADP + phosphate + H(+). Catalyzes the synthesis of beta-citryl-L-glutamate and N-acetyl-L-aspartyl-L-glutamate. Beta-citryl-L-glutamate is synthesized more efficiently than N-acetyl-L-aspartyl-L-glutamate. The sequence is that of Beta-citrylglutamate synthase B (RIMKLB) from Homo sapiens (Human).